The primary structure comprises 544 residues: CTP synthase (544 aa).

Residues 1-266 (MTKFIFVTGG…DDLICERFGL (266 aa)) are amidoligase domain. Ser-13 provides a ligand contact to CTP. Ser-13 provides a ligand contact to UTP. ATP is bound by residues 14-19 (SLGKGI) and Asp-71. 2 residues coordinate Mg(2+): Asp-71 and Glu-140. Residues 147 to 149 (DIE), 187 to 192 (KTKPTQ), and Lys-223 contribute to the CTP site. Residues 187–192 (KTKPTQ) and Lys-223 each bind UTP. One can recognise a Glutamine amidotransferase type-1 domain in the interval 291–543 (TVAMVGKYVE…VKAAKNYSEA (253 aa)). Gly-354 serves as a coordination point for L-glutamine. Cys-381 serves as the catalytic Nucleophile; for glutamine hydrolysis. L-glutamine contacts are provided by residues 382 to 385 (LGMQ), Glu-404, and Arg-471. Residues His-516 and Glu-518 contribute to the active site.

The protein belongs to the CTP synthase family. In terms of assembly, homotetramer.

It carries out the reaction UTP + L-glutamine + ATP + H2O = CTP + L-glutamate + ADP + phosphate + 2 H(+). It catalyses the reaction L-glutamine + H2O = L-glutamate + NH4(+). The catalysed reaction is UTP + NH4(+) + ATP = CTP + ADP + phosphate + 2 H(+). The protein operates within pyrimidine metabolism; CTP biosynthesis via de novo pathway; CTP from UDP: step 2/2. Allosterically activated by GTP, when glutamine is the substrate; GTP has no effect on the reaction when ammonia is the substrate. The allosteric effector GTP functions by stabilizing the protein conformation that binds the tetrahedral intermediate(s) formed during glutamine hydrolysis. Inhibited by the product CTP, via allosteric rather than competitive inhibition. Its function is as follows. Catalyzes the ATP-dependent amination of UTP to CTP with either L-glutamine or ammonia as the source of nitrogen. Regulates intracellular CTP levels through interactions with the four ribonucleotide triphosphates. The protein is CTP synthase of Psychrobacter cryohalolentis (strain ATCC BAA-1226 / DSM 17306 / VKM B-2378 / K5).